The chain runs to 301 residues: uncharacterized protein (301 aa).

The 58-residue stretch at 1 to 58 (MDIRHLTYFLEVARLKSFTKASQSLYVSQPTISKMIKNLEEELGIELFYRNGRQVELT) folds into the HTH lysR-type domain. Positions 18–37 (FTKASQSLYVSQPTISKMIK) form a DNA-binding region, H-T-H motif.

The protein belongs to the LysR transcriptional regulatory family.

This is an uncharacterized protein from Bacillus subtilis (strain 168).